Consider the following 449-residue polypeptide: GTPase Der (449 aa).

2 consecutive EngA-type G domains span residues 2–169 (FTVA…QLPP) and 180–355 (VRFC…EQLT). GTP-binding positions include 8-15 (GRPNVGKS), 55-59 (DTGGL), 118-121 (NKSE), 186-193 (GKPNVGKS), 233-237 (DTAGI), and 298-301 (NKWD). The 85-residue stretch at 356–440 (KKISTSLLND…PITLYFKSKN (85 aa)) folds into the KH-like domain.

This sequence belongs to the TRAFAC class TrmE-Era-EngA-EngB-Septin-like GTPase superfamily. EngA (Der) GTPase family. In terms of assembly, associates with the 50S ribosomal subunit.

Its function is as follows. GTPase that plays an essential role in the late steps of ribosome biogenesis. In Mycoplasma pneumoniae (strain ATCC 29342 / M129 / Subtype 1) (Mycoplasmoides pneumoniae), this protein is GTPase Der.